A 302-amino-acid chain; its full sequence is 1,2-dihydroxynaphthalene dioxygenase (302 aa).

VOC domains are found at residues glutamate 9 to glycine 124 and glycine 149 to arginine 270. Histidine 152 is a Fe cation binding site. Substrate is bound by residues histidine 152, aspartate 199–histidine 200, histidine 215, and tyrosine 256. Position 215 (histidine 215) interacts with Fe cation. Glutamate 266 is a binding site for Fe cation.

It belongs to the extradiol ring-cleavage dioxygenase family. It depends on Fe(2+) as a cofactor.

It catalyses the reaction naphthalene-1,2-diol + O2 = 2-hydroxychromene-2-carboxylate + H(+). It participates in aromatic compound metabolism; naphthalene degradation. Functionally, involved in the naphthalene catabolic pathway. Catalyzes the meta-cleavage of 1,2-dihydroxynaphthalene (1,2-DHN) to yield 2-hydroxychromene-2-carboxylic acid. This Pseudomonas putida (Arthrobacter siderocapsulatus) protein is 1,2-dihydroxynaphthalene dioxygenase (nahC).